We begin with the raw amino-acid sequence, 331 residues long: DSC E3 ubiquitin ligase complex subunit D (331 aa).

The N-linked (GlcNAc...) asparagine glycan is linked to Asn26. Transmembrane regions (helical) follow at residues 63–83 (ILIYCELSALYYMDCSVILFA), 107–127 (PFIGAIFVSNIFCMIFHNFFT), and 159–179 (LFLLDFLVLILDLVMLGLIVE). Residues 188–225 (STTSTEILRVQDHDSEERGVHRTRPESRSSVVGAELDE) are disordered. Residues 196-214 (RVQDHDSEERGVHRTRPES) are compositionally biased toward basic and acidic residues.

As to quaternary structure, component of the DSC E3 ubiquitin ligase complex composed of dscA, dscB, dscC and dscD.

It localises to the endoplasmic reticulum membrane. Its pathway is protein modification; protein ubiquitination. In terms of biological role, component of the DSC E3 ubiquitin ligase complex which is required for the srbA transcriptional activator proteolytic cleavage to release the soluble transcription factor from the membrane in low oxygen or sterol conditions. Required for growth during hypoxia and triazole drug susceptibility, as well as for virulence in a murine model of invasive pulmonary aspergillosis (IPA). The chain is DSC E3 ubiquitin ligase complex subunit D from Aspergillus fumigatus (strain ATCC MYA-4609 / CBS 101355 / FGSC A1100 / Af293) (Neosartorya fumigata).